A 198-amino-acid chain; its full sequence is Carnitine operon protein CaiE (198 aa).

The tract at residues 179 to 198 (VEENRPRLKGTTDVKPKSAQ) is disordered. Basic and acidic residues predominate over residues 180-198 (EENRPRLKGTTDVKPKSAQ).

It belongs to the transferase hexapeptide repeat family.

Its pathway is amine and polyamine metabolism; carnitine metabolism. Overproduction of CaiE stimulates the activity of CaiB and CaiD. The sequence is that of Carnitine operon protein CaiE from Salmonella enteritidis PT4 (strain P125109).